The primary structure comprises 229 residues: Putative 3-methyladenine DNA glycosylase (229 aa).

It belongs to the DNA glycosylase MPG family.

In Enterococcus faecalis (strain ATCC 700802 / V583), this protein is Putative 3-methyladenine DNA glycosylase.